A 242-amino-acid polypeptide reads, in one-letter code: Floral homeotic protein AGAMOUS (242 aa).

In terms of domain architecture, MADS-box spans 19–73 (RGKIEIKRIENTTNRQVTFCKRRNGLLKKAYELSVLCDAEVALIVFSSRGRLYEY). The 91-residue stretch at 103–193 (AQYYQQEASK…RAKIAETERS (91 aa)) folds into the K-box domain.

Expressed exclusively in stamens and carpels.

It is found in the nucleus. Probable transcription factor involved in regulating genes that determines stamen and carpel development in wild-type flowers. This Petunia hybrida (Petunia) protein is Floral homeotic protein AGAMOUS (AG1).